The sequence spans 295 residues: 33 kDa chaperonin (295 aa).

Intrachain disulfides connect C237-C239 and C270-C273.

Belongs to the HSP33 family. In terms of processing, under oxidizing conditions two disulfide bonds are formed involving the reactive cysteines. Under reducing conditions zinc is bound to the reactive cysteines and the protein is inactive.

It localises to the cytoplasm. In terms of biological role, redox regulated molecular chaperone. Protects both thermally unfolding and oxidatively damaged proteins from irreversible aggregation. Plays an important role in the bacterial defense system toward oxidative stress. This Symbiobacterium thermophilum (strain DSM 24528 / JCM 14929 / IAM 14863 / T) protein is 33 kDa chaperonin.